The primary structure comprises 430 residues: Adenylosuccinate synthetase (430 aa).

Residues 12-18 and 40-42 contribute to the GTP site; these read GDEGKGK and GHT. The Proton acceptor role is filled by aspartate 13. Residues aspartate 13 and glycine 40 each coordinate Mg(2+). IMP contacts are provided by residues 13-16, 38-41, threonine 128, arginine 142, glutamine 223, threonine 238, and arginine 302; these read DEGK and NAGH. Residue histidine 41 is the Proton donor of the active site. 298–304 provides a ligand contact to substrate; sequence TTTGRPR. Residues arginine 304, 330-332, and 412-414 contribute to the GTP site; these read SID and SVG.

It belongs to the adenylosuccinate synthetase family. As to quaternary structure, homodimer. Mg(2+) is required as a cofactor.

It localises to the cytoplasm. It catalyses the reaction IMP + L-aspartate + GTP = N(6)-(1,2-dicarboxyethyl)-AMP + GDP + phosphate + 2 H(+). It participates in purine metabolism; AMP biosynthesis via de novo pathway; AMP from IMP: step 1/2. Plays an important role in the de novo pathway of purine nucleotide biosynthesis. Catalyzes the first committed step in the biosynthesis of AMP from IMP. The protein is Adenylosuccinate synthetase of Streptococcus pyogenes serotype M3 (strain ATCC BAA-595 / MGAS315).